The following is a 189-amino-acid chain: UPF0312 protein VC0395_0473/VC395_A0785 (189 aa).

The signal sequence occupies residues 1-22 (MKKTLMAVGLAAVISIPFAANA).

Belongs to the UPF0312 family. Type 1 subfamily.

Its subcellular location is the periplasm. The protein is UPF0312 protein VC0395_0473/VC395_A0785 of Vibrio cholerae serotype O1 (strain ATCC 39541 / Classical Ogawa 395 / O395).